The chain runs to 408 residues: Na(+)-translocating NADH-quinone reductase subunit F (408 aa).

Residues 4 to 24 form a helical membrane-spanning segment; sequence VYLGVGMFTAIVLVLVLVILF. The 2Fe-2S ferredoxin-type domain maps to 33–127; sequence GDIIIGINGD…DMEIELDEEI (95 aa). Residues cysteine 70, cysteine 76, cysteine 79, and cysteine 111 each contribute to the [2Fe-2S] cluster site. In terms of domain architecture, FAD-binding FR-type spans 130–270; that stretch reads IKKWECDVIS…SGPFGEFFAK (141 aa).

The protein belongs to the NqrF family. In terms of assembly, composed of six subunits; NqrA, NqrB, NqrC, NqrD, NqrE and NqrF. [2Fe-2S] cluster serves as cofactor. It depends on FAD as a cofactor.

The protein resides in the cell inner membrane. It catalyses the reaction a ubiquinone + n Na(+)(in) + NADH + H(+) = a ubiquinol + n Na(+)(out) + NAD(+). NQR complex catalyzes the reduction of ubiquinone-1 to ubiquinol by two successive reactions, coupled with the transport of Na(+) ions from the cytoplasm to the periplasm. The first step is catalyzed by NqrF, which accepts electrons from NADH and reduces ubiquinone-1 to ubisemiquinone by a one-electron transfer pathway. The protein is Na(+)-translocating NADH-quinone reductase subunit F of Shewanella denitrificans (strain OS217 / ATCC BAA-1090 / DSM 15013).